The chain runs to 72 residues: Hirudin variant-2 (72 aa).

The first 7 residues, 1 to 7, serve as a signal peptide directing secretion; sequence AICVSQA. The segment at 8-10 is interaction with thrombin active site; it reads ITY. Cystine bridges form between Cys-13-Cys-21, Cys-23-Cys-35, and Cys-29-Cys-46. Residues 47 to 72 are disordered; sequence VTGEGTPNPESHNNGDFEEIPEEYLQ. An O-linked (GalNAc...) threonine glycan is attached at Thr-52. The tract at residues 62 to 72 is interaction with fibrinogen-binding exosite of thrombin; sequence DFEEIPEEYLQ. Residues 62–72 are compositionally biased toward acidic residues; it reads DFEEIPEEYLQ. Tyr-70 is subject to Sulfotyrosine.

The protein belongs to the protease inhibitor I14 (hirudin) family.

It localises to the secreted. In terms of biological role, hirudin is a potent thrombin-specific protease inhibitor. It forms a stable non-covalent complex with alpha-thrombin, thereby abolishing its ability to cleave fibrinogen. The sequence is that of Hirudin variant-2 from Hirudo medicinalis (Medicinal leech).